The primary structure comprises 617 residues: DNA mismatch repair protein MutL (617 aa).

Residues 363–394 are disordered; it reads YAPAYGARPPQPSAWSVDTSPHRPLDDGQNRF. Basic and acidic residues predominate over residues 382 to 392; the sequence is SPHRPLDDGQN.

The protein belongs to the DNA mismatch repair MutL/HexB family.

This protein is involved in the repair of mismatches in DNA. It is required for dam-dependent methyl-directed DNA mismatch repair. May act as a 'molecular matchmaker', a protein that promotes the formation of a stable complex between two or more DNA-binding proteins in an ATP-dependent manner without itself being part of a final effector complex. This is DNA mismatch repair protein MutL from Allorhizobium ampelinum (strain ATCC BAA-846 / DSM 112012 / S4) (Agrobacterium vitis (strain S4)).